A 284-amino-acid chain; its full sequence is Exported repetitive protein (284 aa).

The first 22 residues, 1 to 22 (MPNRRRRKLSTAMSAVAALAVA), serve as a signal peptide directing secretion. The Extracellular portion of the chain corresponds to 23 to 252 (SPCAYFLVYE…MPSIMQAVQN (230 aa)). Positions 80 to 216 (TGSGDASTGL…SPATTSTGGG (137 aa)) are disordered. Residues 86 to 110 (STGLTGPGLTSPGLTSPGLTSPGLT) show a composition bias toward low complexity. Tandem repeats lie at residues 92 to 96 (PGLTS), 97 to 101 (PGLTS), 102 to 106 (PGLTS), 107 to 111 (PGLTD), 112 to 116 (PALTS), 117 to 121 (PGLTP), 144 to 148 (PALTN), 149 to 153 (PALTS), 154 to 158 (PTGAT), 159 to 163 (PGLTS), 164 to 168 (PTGLD), and 169 to 173 (PALGG). The interval 92–121 (PGLTSPGLTSPGLTSPGLTDPALTSPGLTP) is 6 X 5 AA tandem repeats of P-[GA]-L-T-S. Residues 144-173 (PALTNPALTSPTGATPGLTSPTGLDPALGG) are 6 X 5 AA approximate tandem repeats of P-[ATG]-[LG]-X-X. The segment covering 145–165 (ALTNPALTSPTGATPGLTSPT) has biased composition (polar residues). The segment covering 202–212 (GTIPSSPATTS) has biased composition (low complexity). The helical transmembrane segment at 253 to 273 (GGAAAPAASPPVPPIPAAAAV) threads the bilayer. Residues 274-284 (PPTDPITVPVA) lie on the Cytoplasmic side of the membrane.

It to M.leprae 28 kDa antigen.

It localises to the cell membrane. Functionally, surface-exposed protein required for multiplication and intracellular growth. The chain is Exported repetitive protein (erp) from Mycobacterium bovis (strain ATCC BAA-935 / AF2122/97).